Here is a 524-residue protein sequence, read N- to C-terminus: Probable plastidic glucose transporter 1 (524 aa).

12 helical membrane passes run 88 to 108, 122 to 142, 151 to 171, 179 to 199, 208 to 228, 239 to 259, 320 to 340, 357 to 377, 386 to 406, 420 to 440, 452 to 472, and 483 to 503; these read MANF…VSIA, LVVS…GPLV, FQIF…AHSL, FLVG…ISEV, LGTL…LLGI, TMLY…QFAV, VAFI…NGVL, QASL…SYLI, LIGS…AVGF, GTLM…GLII, IMGF…LFFL, and VYAS…LFTV.

The protein belongs to the major facilitator superfamily. Sugar transporter (TC 2.A.1.1) family.

The protein resides in the plastid. It localises to the chloroplast membrane. Functionally, may be involved in the efflux of glucose towards the cytosol. This is Probable plastidic glucose transporter 1 from Arabidopsis thaliana (Mouse-ear cress).